Consider the following 25-residue polypeptide: Arginine attenuator peptide (25 aa).

This sequence belongs to the arginine attenuator peptide family.

In terms of biological role, arginine attenuator peptide (AAP) that has a regulatory role in the production of arginine-specific carbamoyl phosphate synthetase. Encoded by an upstream open reading frame (uORF) within the 5'-leader region of arginine-specific carbamoyl phosphate synthetase small chain (CPA1) mRNA, it attenuates the translation of the downstream CPA1 ORF. In the presence of high concentrations of arginine, ribosomes translating the uORF encoding AAP stall at the termination codon, resulting in reduced translation from the downstream CPA1 initiation codon. In Saccharomyces cerevisiae (strain ATCC 204508 / S288c) (Baker's yeast), this protein is Arginine attenuator peptide.